We begin with the raw amino-acid sequence, 277 residues long: Thymidylate synthase (277 aa).

Residues Arg-27 and 132–133 (RR) each bind dUMP. The active-site Nucleophile is Cys-152. Residues 179–182 (RSAD), Asn-190, and 220–222 (HVY) contribute to the dUMP site. Asp-182 contributes to the (6R)-5,10-methylene-5,6,7,8-tetrahydrofolate binding site. Ala-276 lines the (6R)-5,10-methylene-5,6,7,8-tetrahydrofolate pocket.

Belongs to the thymidylate synthase family. Bacterial-type ThyA subfamily. As to quaternary structure, homodimer.

The protein localises to the cytoplasm. The enzyme catalyses dUMP + (6R)-5,10-methylene-5,6,7,8-tetrahydrofolate = 7,8-dihydrofolate + dTMP. The protein operates within pyrimidine metabolism; dTTP biosynthesis. In terms of biological role, catalyzes the reductive methylation of 2'-deoxyuridine-5'-monophosphate (dUMP) to 2'-deoxythymidine-5'-monophosphate (dTMP) while utilizing 5,10-methylenetetrahydrofolate (mTHF) as the methyl donor and reductant in the reaction, yielding dihydrofolate (DHF) as a by-product. This enzymatic reaction provides an intracellular de novo source of dTMP, an essential precursor for DNA biosynthesis. This Albidiferax ferrireducens (strain ATCC BAA-621 / DSM 15236 / T118) (Rhodoferax ferrireducens) protein is Thymidylate synthase.